A 154-amino-acid polypeptide reads, in one-letter code: Ribosomal RNA large subunit methyltransferase H (154 aa).

S-adenosyl-L-methionine-binding positions include Gly-103 and 122–127; that span reads FSKLTF.

It belongs to the RNA methyltransferase RlmH family. In terms of assembly, homodimer.

It localises to the cytoplasm. It carries out the reaction pseudouridine(1915) in 23S rRNA + S-adenosyl-L-methionine = N(3)-methylpseudouridine(1915) in 23S rRNA + S-adenosyl-L-homocysteine + H(+). Its function is as follows. Specifically methylates the pseudouridine at position 1915 (m3Psi1915) in 23S rRNA. The chain is Ribosomal RNA large subunit methyltransferase H from Caldicellulosiruptor saccharolyticus (strain ATCC 43494 / DSM 8903 / Tp8T 6331).